Here is a 202-residue protein sequence, read N- to C-terminus: MNKLFLILLLIFSHEVFSQTSAEVLQSKLNAIQTMTANFSQIVKAKNHEVSRSSGSMALQRPGRFRWQTKDPLEQLIVADGQKMWIYDVDLEQVTVKNQEKGLGGTAALFLSGYDETLTHDFDVSEKQKGKLTVFDLKSKSAKENFQRIKLIFSQSALIGLELYDQLGQITDVKLVQIKSNPKLPAKLFQFKPPKGVDVVKQ.

An N-terminal signal peptide occupies residues 1-18 (MNKLFLILLLIFSHEVFS).

Belongs to the LolA family. As to quaternary structure, monomer.

Its subcellular location is the periplasm. Its function is as follows. Participates in the translocation of lipoproteins from the inner membrane to the outer membrane. Only forms a complex with a lipoprotein if the residue after the N-terminal Cys is not an aspartate (The Asp acts as a targeting signal to indicate that the lipoprotein should stay in the inner membrane). The polypeptide is Outer-membrane lipoprotein carrier protein (Legionella pneumophila (strain Paris)).